Reading from the N-terminus, the 520-residue chain is Probable DNA ligase (520 aa).

E213 is an ATP binding site. K215 acts as the N6-AMP-lysine intermediate in catalysis. The ATP site is built by R220, R235, E264, F300, R372, and K378.

The protein belongs to the ATP-dependent DNA ligase family. The cofactor is Mg(2+).

It catalyses the reaction ATP + (deoxyribonucleotide)n-3'-hydroxyl + 5'-phospho-(deoxyribonucleotide)m = (deoxyribonucleotide)n+m + AMP + diphosphate.. In terms of biological role, DNA ligase that seals nicks in double-stranded DNA during DNA replication, DNA recombination and DNA repair. The chain is Probable DNA ligase from Mycobacterium sp. (strain JLS).